Here is a 260-residue protein sequence, read N- to C-terminus: Ribosomal RNA small subunit methyltransferase J (260 aa).

Residues 125 to 126 and aspartate 179 contribute to the S-adenosyl-L-methionine site; that span reads ER.

It belongs to the methyltransferase superfamily. RsmJ family.

The protein localises to the cytoplasm. It carries out the reaction guanosine(1516) in 16S rRNA + S-adenosyl-L-methionine = N(2)-methylguanosine(1516) in 16S rRNA + S-adenosyl-L-homocysteine + H(+). In terms of biological role, specifically methylates the guanosine in position 1516 of 16S rRNA. The protein is Ribosomal RNA small subunit methyltransferase J of Pseudomonas entomophila (strain L48).